Here is a 66-residue protein sequence, read N- to C-terminus: Large ribosomal subunit protein bL31 (66 aa).

Zn(2+)-binding residues include cysteine 16, cysteine 18, cysteine 36, and cysteine 39.

Belongs to the bacterial ribosomal protein bL31 family. Type A subfamily. In terms of assembly, part of the 50S ribosomal subunit. Zn(2+) is required as a cofactor.

Functionally, binds the 23S rRNA. This chain is Large ribosomal subunit protein bL31, found in Nitratiruptor sp. (strain SB155-2).